A 440-amino-acid polypeptide reads, in one-letter code: MTSPSAPSSAERPRLPGALDGPRLAAAAAEHGTPLWLYDAATIRAQIDRLRRFDVIRYAQKACSNLHILRLMREEGVHVDAVSEGEIERALAAGYRVGGDDEPIVFTADLLNRSTLRRVVELGIPVNAGSPQMLDQVGRAAPGHPVWIRINPGFGHGHSRKTNTGGEHSKHGIWHEHLEESLALVDRHGLDLVGLHMHIGSGVDYGHLESVCETMVKQVRMAGRDIRAISAGGGLSVPYTPGDPEIDTDRYFELWDAARRELVSELGHPVRLEIEPGRFLVAGAGVLAAEVRAQKPVGSNYFVLVDAGFNDLMRPAMYGSNHRVSVLDADGAPRASDARDTVLAGPLCESGDVFTQVEGGDVEPVPVPRTDVGDLVVFHDTGAYGASMSSTYNSRPLIPEVLVDGAETRLIRRRQTVAELLAPELEPGPALSPRPSRDPR.

The residue at position 61 (K61) is an N6-(pyridoxal phosphate)lysine. Pyridoxal 5'-phosphate-binding positions include G234 and 275 to 278 (EPGR). Substrate-binding residues include R278, R314, and Y318. C348 functions as the Proton donor in the catalytic mechanism. Substrate-binding residues include E349 and Y384. Y384 lines the pyridoxal 5'-phosphate pocket. Residues 421 to 431 (LAPELEPGPAL) show a composition bias toward low complexity. Residues 421–440 (LAPELEPGPALSPRPSRDPR) are disordered.

The protein belongs to the Orn/Lys/Arg decarboxylase class-II family. LysA subfamily. As to quaternary structure, homodimer. Pyridoxal 5'-phosphate is required as a cofactor.

The enzyme catalyses meso-2,6-diaminopimelate + H(+) = L-lysine + CO2. It participates in amino-acid biosynthesis; L-lysine biosynthesis via DAP pathway; L-lysine from DL-2,6-diaminopimelate: step 1/1. Specifically catalyzes the decarboxylation of meso-diaminopimelate (meso-DAP) to L-lysine. This chain is Diaminopimelate decarboxylase, found in Streptomyces coelicolor (strain ATCC BAA-471 / A3(2) / M145).